A 384-amino-acid chain; its full sequence is ATP synthase subunit a (384 aa).

The interval 22-60 (PAPAAAPVEQHGAPAPEAAAPDAHAAPAGEHGAAVEAHA) is disordered. 6 consecutive transmembrane segments (helical) span residues 131-151 (KHVMMMWFASALLLVVVLAAV), 189-209 (FVPYLVTAFFFILFLNLFGLI), 218-238 (NLSVTVALALFTFLITQYAAI), 258-278 (LAPLWIIMIPVEFLGLFTKPF), 293-313 (FVILALLGLIFALGTPWVAFG), and 319-339 (LGIFLLELFVAFVQAYIFTML). A disordered region spans residues 355–384 (HGHAEEHGHAGPGMGSEHGSHVAGASPGHG).

The protein belongs to the ATPase A chain family. In terms of assembly, F-type ATPases have 2 components, CF(1) - the catalytic core - and CF(0) - the membrane proton channel. CF(1) has five subunits: alpha(3), beta(3), gamma(1), delta(1), epsilon(1). CF(0) has three main subunits: a(1), b(2) and c(9-12). The alpha and beta chains form an alternating ring which encloses part of the gamma chain. CF(1) is attached to CF(0) by a central stalk formed by the gamma and epsilon chains, while a peripheral stalk is formed by the delta and b chains.

It localises to the cell inner membrane. Its function is as follows. Key component of the proton channel; it plays a direct role in the translocation of protons across the membrane. The protein is ATP synthase subunit a of Anaeromyxobacter dehalogenans (strain 2CP-1 / ATCC BAA-258).